Consider the following 328-residue polypeptide: Delta-aminolevulinic acid dehydratase (328 aa).

Lys-200 (schiff-base intermediate with substrate) is an active-site residue. Residues Arg-210 and Lys-222 each contribute to the 5-aminolevulinate site. Glu-238 contacts Mg(2+). Lys-253 functions as the Schiff-base intermediate with substrate in the catalytic mechanism. Positions 279 and 318 each coordinate 5-aminolevulinate.

This sequence belongs to the ALAD family. Homooctamer.

The catalysed reaction is 2 5-aminolevulinate = porphobilinogen + 2 H2O + H(+). The protein operates within porphyrin-containing compound metabolism; protoporphyrin-IX biosynthesis; coproporphyrinogen-III from 5-aminolevulinate: step 1/4. Stimulated by magnesium, inhibited by zinc. Functionally, catalyzes an early step in the biosynthesis of tetrapyrroles. Binds two molecules of 5-aminolevulinate per subunit, each at a distinct site, and catalyzes their condensation to form porphobilinogen. The chain is Delta-aminolevulinic acid dehydratase (hemB) from Chlorobaculum parvum (strain DSM 263 / NCIMB 8327) (Chlorobium vibrioforme subsp. thiosulfatophilum).